We begin with the raw amino-acid sequence, 215 residues long: Large ribosomal subunit protein uL3 (215 aa).

Gln-151 bears the N5-methylglutamine mark.

The protein belongs to the universal ribosomal protein uL3 family. As to quaternary structure, part of the 50S ribosomal subunit. Forms a cluster with proteins L14 and L19. In terms of processing, methylated by PrmB.

Functionally, one of the primary rRNA binding proteins, it binds directly near the 3'-end of the 23S rRNA, where it nucleates assembly of the 50S subunit. The sequence is that of Large ribosomal subunit protein uL3 from Rickettsia massiliae (strain Mtu5).